The primary structure comprises 154 residues: Ribosome maturation factor RimP (154 aa).

This sequence belongs to the RimP family.

It localises to the cytoplasm. In terms of biological role, required for maturation of 30S ribosomal subunits. This Clostridium novyi (strain NT) protein is Ribosome maturation factor RimP.